The sequence spans 563 residues: Arginine--tRNA ligase (563 aa).

Residues 121-131 (PNIAKPFSIGH) carry the 'HIGH' region motif.

The protein belongs to the class-I aminoacyl-tRNA synthetase family. In terms of assembly, monomer.

It is found in the cytoplasm. The enzyme catalyses tRNA(Arg) + L-arginine + ATP = L-arginyl-tRNA(Arg) + AMP + diphosphate. This Streptococcus agalactiae serotype III (strain NEM316) protein is Arginine--tRNA ligase.